A 434-amino-acid polypeptide reads, in one-letter code: D-amino acid dehydrogenase (434 aa).

3-17 lines the FAD pocket; it reads VVILGSGVVGVASAW.

Belongs to the DadA oxidoreductase family. FAD is required as a cofactor.

The enzyme catalyses a D-alpha-amino acid + A + H2O = a 2-oxocarboxylate + AH2 + NH4(+). It participates in amino-acid degradation; D-alanine degradation; NH(3) and pyruvate from D-alanine: step 1/1. Oxidative deamination of D-amino acids. The chain is D-amino acid dehydrogenase from Serratia proteamaculans (strain 568).